Here is a 620-residue protein sequence, read N- to C-terminus: Chaperone protein HscA homolog (620 aa).

Belongs to the heat shock protein 70 family.

In terms of biological role, chaperone involved in the maturation of iron-sulfur cluster-containing proteins. Has a low intrinsic ATPase activity which is markedly stimulated by HscB. The protein is Chaperone protein HscA homolog of Pseudomonas fluorescens (strain SBW25).